The primary structure comprises 1377 residues: DNA-directed RNA polymerase subunit beta (1377 aa).

The protein belongs to the RNA polymerase beta chain family. As to quaternary structure, the RNAP catalytic core consists of 2 alpha, 1 beta, 1 beta' and 1 omega subunit. When a sigma factor is associated with the core the holoenzyme is formed, which can initiate transcription.

The catalysed reaction is RNA(n) + a ribonucleoside 5'-triphosphate = RNA(n+1) + diphosphate. Its function is as follows. DNA-dependent RNA polymerase catalyzes the transcription of DNA into RNA using the four ribonucleoside triphosphates as substrates. This is DNA-directed RNA polymerase subunit beta from Brucella melitensis biotype 2 (strain ATCC 23457).